Consider the following 533-residue polypeptide: Retinoid isomerohydrolase (533 aa).

Position 2 is an N-acetylserine (serine 2). Residues threonine 101 and threonine 105 each carry the phosphothreonine modification. Cysteine 112 carries the S-palmitoyl cysteine; in membrane form lipid modification. N6-acetyllysine is present on lysine 113. Residue serine 117 is modified to Phosphoserine. Histidine 180 is a Fe cation binding site. Cysteine 231 carries S-palmitoyl cysteine; in membrane form lipidation. Fe cation contacts are provided by histidine 241 and histidine 313. S-palmitoyl cysteine; in membrane form attachment occurs at residues cysteine 329 and cysteine 330. Histidine 527 contacts Fe cation.

Belongs to the carotenoid oxygenase family. As to quaternary structure, interacts with MYO7A; this mediates light-dependent intracellular transport of RPE65. Fe(2+) serves as cofactor. Palmitoylation by LRAT regulates ligand binding specificity; the palmitoylated form (membrane form) specifically binds all-trans-retinyl-palmitate, while the soluble unpalmitoylated form binds all-trans-retinol (vitamin A). As to expression, retinal pigment epithelium specific.

The protein resides in the cytoplasm. Its subcellular location is the cell membrane. The protein localises to the microsome membrane. It catalyses the reaction an all-trans-retinyl ester + H2O = 11-cis-retinol + a fatty acid + H(+). The catalysed reaction is lutein = (3R,3'S)-zeaxanthin. It carries out the reaction all-trans-retinyl hexadecanoate + H2O = 11-cis-retinol + hexadecanoate + H(+). Critical isomerohydrolase in the retinoid cycle involved in regeneration of 11-cis-retinal, the chromophore of rod and cone opsins. Catalyzes the cleavage and isomerization of all-trans-retinyl fatty acid esters to 11-cis-retinol which is further oxidized by 11-cis retinol dehydrogenase to 11-cis-retinal for use as visual chromophore. Essential for the production of 11-cis retinal for both rod and cone photoreceptors. Also capable of catalyzing the isomerization of lutein to meso-zeaxanthin an eye-specific carotenoid. The soluble form binds vitamin A (all-trans-retinol), making it available for LRAT processing to all-trans-retinyl ester. The membrane form, palmitoylated by LRAT, binds all-trans-retinyl esters, making them available for IMH (isomerohydrolase) processing to all-cis-retinol. The soluble form is regenerated by transferring its palmitoyl groups onto 11-cis-retinol, a reaction catalyzed by LRAT. The protein is Retinoid isomerohydrolase (RPE65) of Canis lupus familiaris (Dog).